A 300-amino-acid chain; its full sequence is Quinolinate synthase (300 aa).

Residues H21 and S38 each coordinate iminosuccinate. Position 83 (C83) interacts with [4Fe-4S] cluster. Residues Y109–N111 and S126 each bind iminosuccinate. C170 provides a ligand contact to [4Fe-4S] cluster. Iminosuccinate is bound by residues H196–E198 and T213. C256 serves as a coordination point for [4Fe-4S] cluster.

Belongs to the quinolinate synthase family. Type 2 subfamily. In terms of assembly, monomer. Homodimer. [4Fe-4S] cluster is required as a cofactor.

The protein localises to the cytoplasm. The enzyme catalyses iminosuccinate + dihydroxyacetone phosphate = quinolinate + phosphate + 2 H2O + H(+). It functions in the pathway cofactor biosynthesis; NAD(+) biosynthesis; quinolinate from iminoaspartate: step 1/1. Catalyzes the condensation of iminoaspartate with dihydroxyacetone phosphate to form quinolinate. This chain is Quinolinate synthase, found in Pyrococcus horikoshii (strain ATCC 700860 / DSM 12428 / JCM 9974 / NBRC 100139 / OT-3).